Consider the following 614-residue polypeptide: uncharacterized protein (614 aa).

A run of 2 helical transmembrane segments spans residues 494-516 (VAYW…GSTL) and 552-574 (LLIG…IVHA). Positions 588–614 (AVRPRADKDIQTLTHRDEAEEDQEEDS) are disordered. Positions 591-605 (PRADKDIQTLTHRDE) are enriched in basic and acidic residues.

The protein resides in the cell membrane. This is an uncharacterized protein from Treponema pallidum (strain Nichols).